Consider the following 263-residue polypeptide: 5'-nucleotidase SurE (263 aa).

The a divalent metal cation site is built by D21, D22, S52, and N105.

This sequence belongs to the SurE nucleotidase family. It depends on a divalent metal cation as a cofactor.

The protein resides in the cytoplasm. It catalyses the reaction a ribonucleoside 5'-phosphate + H2O = a ribonucleoside + phosphate. Nucleotidase that shows phosphatase activity on nucleoside 5'-monophosphates. The protein is 5'-nucleotidase SurE of Vibrio cholerae serotype O1 (strain ATCC 39541 / Classical Ogawa 395 / O395).